The chain runs to 642 residues: Chaperone protein HtpG (642 aa).

An a; substrate-binding region spans residues 1–348; the sequence is MSTKIEQLEF…AQDLSLNVSR (348 aa). Residues 349–564 form a b region; the sequence is EILQQDRQIR…AFSMSPALER (216 aa). Positions 565 to 642 are c; that stretch reads MYRASGQPVP…MLANRLARTV (78 aa).

Belongs to the heat shock protein 90 family. In terms of assembly, homodimer.

It localises to the cytoplasm. Its function is as follows. Molecular chaperone. Has ATPase activity. This chain is Chaperone protein HtpG, found in Rhodococcus jostii (strain RHA1).